The primary structure comprises 178 residues: Inorganic pyrophosphatase (178 aa).

Lys-31, Arg-45, and Tyr-57 together coordinate substrate. Residues Asp-67, Asp-72, and Asp-104 each contribute to the Mg(2+) site. Residue Tyr-141 participates in substrate binding.

This sequence belongs to the PPase family. Homohexamer. Mg(2+) is required as a cofactor.

Its subcellular location is the cytoplasm. The enzyme catalyses diphosphate + H2O = 2 phosphate + H(+). In terms of biological role, catalyzes the hydrolysis of inorganic pyrophosphate (PPi) forming two phosphate ions. The sequence is that of Inorganic pyrophosphatase from Leptospira interrogans serogroup Icterohaemorrhagiae serovar copenhageni (strain Fiocruz L1-130).